The sequence spans 187 residues: CASP-like protein 2 (187 aa).

Residues 1 to 24 (MKVSAVETGEISQVSAPRKGMIRG) lie on the Cytoplasmic side of the membrane. Residues 25–45 (LSIMDFILRIVAAIGTLGSAL) traverse the membrane as a helical segment. The Extracellular portion of the chain corresponds to 46-72 (STGTTRETLPFTTQFVKFRAVFDDLPT). The chain crosses the membrane as a helical span at residues 73 to 93 (FVFFVTSNSIVCGYLVLSLAL). Residues 94 to 108 (SFFHIIRRSSAAKSR) are Cytoplasmic-facing. The helical transmembrane segment at 109–129 (ILLVFLDTVMFGLLTTGAAAA) threads the bilayer. The Extracellular segment spans residues 130–163 (GTIVYVSHYGNVNANWFPFCGQYNHFCERISGSL). Residues 164–184 (IGSFIAVVIFMIIILMSAVSI) traverse the membrane as a helical segment. Residues 185–187 (SKH) are Cytoplasmic-facing.

This sequence belongs to the Casparian strip membrane proteins (CASP) family. As to quaternary structure, homodimer and heterodimers.

The protein resides in the cell membrane. This Lotus japonicus (Lotus corniculatus var. japonicus) protein is CASP-like protein 2.